The sequence spans 263 residues: Protein M1425_2021 (263 aa).

The protein belongs to the CinA family.

The chain is Protein M1425_2021 from Saccharolobus islandicus (strain M.14.25 / Kamchatka #1) (Sulfolobus islandicus).